The chain runs to 429 residues: Enolase (429 aa).

Position 169 (Q169) interacts with (2R)-2-phosphoglycerate. E211 acts as the Proton donor in catalysis. Mg(2+)-binding residues include D248, E289, and D316. (2R)-2-phosphoglycerate is bound by residues K341, R370, S371, and K392. K341 acts as the Proton acceptor in catalysis.

This sequence belongs to the enolase family. It depends on Mg(2+) as a cofactor.

Its subcellular location is the cytoplasm. The protein localises to the secreted. It is found in the cell surface. The catalysed reaction is (2R)-2-phosphoglycerate = phosphoenolpyruvate + H2O. Its pathway is carbohydrate degradation; glycolysis; pyruvate from D-glyceraldehyde 3-phosphate: step 4/5. Catalyzes the reversible conversion of 2-phosphoglycerate (2-PG) into phosphoenolpyruvate (PEP). It is essential for the degradation of carbohydrates via glycolysis. This chain is Enolase, found in Anaplasma phagocytophilum (strain HZ).